We begin with the raw amino-acid sequence, 294 residues long: uncharacterized protein (294 aa).

An N-terminal signal peptide occupies residues 1 to 19 (MFKRSLFILLLLAASLVKA).

This is an uncharacterized protein from Rickettsia felis (strain ATCC VR-1525 / URRWXCal2) (Rickettsia azadi).